Here is a 329-residue protein sequence, read N- to C-terminus: GTP 3',8-cyclase (329 aa).

In terms of domain architecture, Radical SAM core spans 8–234 (AFARKFYYLR…QLRQRSDGPA (227 aa)). Arg17 contributes to the GTP binding site. [4Fe-4S] cluster contacts are provided by Cys24 and Cys28. Residue Tyr30 coordinates S-adenosyl-L-methionine. Residue Cys31 coordinates [4Fe-4S] cluster. Position 68 (Arg68) interacts with GTP. Gly72 is a binding site for S-adenosyl-L-methionine. Thr99 serves as a coordination point for GTP. Ser123 lines the S-adenosyl-L-methionine pocket. A GTP-binding site is contributed by Lys160. Met194 contributes to the S-adenosyl-L-methionine binding site. [4Fe-4S] cluster contacts are provided by Cys257 and Cys260. 262-264 (RLR) is a GTP binding site. Cys274 contributes to the [4Fe-4S] cluster binding site.

This sequence belongs to the radical SAM superfamily. MoaA family. As to quaternary structure, monomer and homodimer. [4Fe-4S] cluster is required as a cofactor.

It catalyses the reaction GTP + AH2 + S-adenosyl-L-methionine = (8S)-3',8-cyclo-7,8-dihydroguanosine 5'-triphosphate + 5'-deoxyadenosine + L-methionine + A + H(+). It participates in cofactor biosynthesis; molybdopterin biosynthesis. Catalyzes the cyclization of GTP to (8S)-3',8-cyclo-7,8-dihydroguanosine 5'-triphosphate. The polypeptide is GTP 3',8-cyclase (Shigella boydii serotype 18 (strain CDC 3083-94 / BS512)).